Reading from the N-terminus, the 94-residue chain is Integration host factor subunit beta (94 aa).

It belongs to the bacterial histone-like protein family. As to quaternary structure, heterodimer of an alpha and a beta chain.

This protein is one of the two subunits of integration host factor, a specific DNA-binding protein that functions in genetic recombination as well as in transcriptional and translational control. The polypeptide is Integration host factor subunit beta (ihfB) (Serratia marcescens).